The sequence spans 277 residues: Ribosome-inactivating protein luffin-alpha (277 aa).

The N-terminal stretch at 1 to 19 (MKRFTVLILAIFVAASTVE) is a signal peptide. Residue E179 is part of the active site.

This sequence belongs to the ribosome-inactivating protein family. Type 1 RIP subfamily.

The catalysed reaction is Endohydrolysis of the N-glycosidic bond at one specific adenosine on the 28S rRNA.. This chain is Ribosome-inactivating protein luffin-alpha, found in Luffa aegyptiaca (Sponge gourd).